Consider the following 159-residue polypeptide: Ribosome maturation factor RimP (159 aa).

This sequence belongs to the RimP family.

It is found in the cytoplasm. In terms of biological role, required for maturation of 30S ribosomal subunits. In Streptococcus pneumoniae (strain 70585), this protein is Ribosome maturation factor RimP.